Consider the following 982-residue polypeptide: Mineralocorticoid receptor (982 aa).

The segment at 1 to 601 (METKGYHSLP…STGSSRPSKI (601 aa)) is modulating. A compositionally biased stretch (polar residues) spans 230 to 242 (QGTPLTCSPNVEN). Disordered stretches follow at residues 230–328 (QGTP…AAST) and 345–375 (SGTSAGSSTSRDVVPSPDTQEKGAQEVPFPK). 5 positions are modified to phosphoserine: Ser249, Ser258, Ser282, Ser286, and Ser298. Residues 258–299 (SPLSSPLSSMKSSISSPPSHCSVKSPVSSPNNVTPRSSVSSP) show a composition bias toward low complexity. Residues 300–328 (ANINNSRCSVSSPSNTNNRSTLSSPAAST) show a composition bias toward polar residues. The span at 345 to 354 (SGTSAGSSTS) shows a compositional bias: low complexity. The Zn(2+) site is built by Cys602, Cys605, Cys619, Cys622, Cys638, Cys644, Cys654, and Cys657. NR C4-type zinc fingers lie at residues 602 to 622 (CLVCGDEASGCHYGVVTCGSC) and 638 to 662 (CAGRNDCIIDKIRRKNCPACRLQKC). The nuclear receptor DNA-binding region spans 602-667 (CLVCGDEASG…RLQKCLQAGM (66 aa)). The hinge stretch occupies residues 668 to 723 (NLGARRSKKLGKLKGIHEEQPQQQPPPPPPPPQSPEEGTTYIAPAKEPSVNTALVP). The interval 682-708 (GIHEEQPQQQPPPPPPPPQSPEEGTTY) is disordered. Residues 690-701 (QQPPPPPPPPQS) show a composition bias toward pro residues. In terms of domain architecture, NR LBD spans 724 to 962 (QLSAISRALT…EFPAMLVEII (239 aa)). Residues Asn768 and Gln774 each coordinate 21-hydroxyprogesterone. The aldosterone site is built by Asn768 and Gln774. Progesterone-binding residues include Asn768 and Gln774. An important for coactivator binding region spans residues 780–783 (KWAK). 21-hydroxyprogesterone is bound by residues Arg815 and Thr943. Positions 815 and 943 each coordinate aldosterone. Residues Arg815 and Thr943 each coordinate progesterone.

The protein belongs to the nuclear hormone receptor family. NR3 subfamily. Post-translationally, phosphorylated. As to expression, expressed in hippocampus, being restricted to the more superficial cortical layers.

The protein localises to the cytoplasm. It is found in the nucleus. In terms of biological role, receptor for both mineralocorticoids (MC) such as aldosterone and glucocorticoids (GC) such as corticosterone or cortisol. Binds to mineralocorticoid response elements (MRE) and transactivates target genes. The effect of MC is to increase ion and water transport and thus raise extracellular fluid volume and blood pressure and lower potassium levels. In Saimiri sciureus (Common squirrel monkey), this protein is Mineralocorticoid receptor (NR3C2).